A 280-amino-acid chain; its full sequence is MMPLGLFPLPRAAAVLLISLLTLPAQAAERVISLSPSTTELAYAAGLGDKLVAVSAYSDYPESAKKLEHVASWQGINVERILALKPDLILAWRGGNPQRPLDQLAALGIPIFYSDPTHIDQIASDLDKLAQYSPHPEQAHQAAEQFRQHVNTLRDRYARSQPKRTFLQFGTQPLFTSSGHTLQSEVVSLCGGENIFADSRVPWPQVSRERVMTRKPQVIVVSGTQSQVDNVSAFWLPQLVVPVIALNEDWFNRASPRILLAAQQLCQQMASIPTPVAESH.

Residues 1–27 form the signal peptide; that stretch reads MMPLGLFPLPRAAAVLLISLLTLPAQA. One can recognise a Fe/B12 periplasmic-binding domain in the interval 30 to 277; that stretch reads RVISLSPSTT…QMASIPTPVA (248 aa). Position 57 (tyrosine 57) interacts with cyanocob(III)alamin. The cysteines at positions 190 and 266 are disulfide-linked.

It belongs to the BtuF family. The complex is composed of two ATP-binding proteins (BtuD), two transmembrane proteins (BtuC) and a solute-binding protein (BtuF).

Its subcellular location is the periplasm. In terms of biological role, part of the ABC transporter complex BtuCDF involved in vitamin B12 import. Binds vitamin B12 and delivers it to the periplasmic surface of BtuC. The protein is Vitamin B12-binding protein of Yersinia pseudotuberculosis serotype O:3 (strain YPIII).